A 555-amino-acid chain; its full sequence is Solute carrier family 2, facilitated glucose transporter member 10 (555 aa).

At 1–15 the chain is on the cytoplasmic side; the sequence is MGLSSPTLILAATVS. A helical transmembrane segment spans residues 16-36; it reads LLGGIVFGYELGIISGALLVL. Topologically, residues 37–48 are extracellular; that stretch reads KTVYQLTCFEQE. Residues 49-69 traverse the membrane as a helical segment; sequence ALVSAVLFGALLASLIGGIII. Residues 70-82 are Cytoplasmic-facing; it reads DRWGRRTAILASN. The chain crosses the membrane as a helical span at residues 83–103; sequence LVVLAGSIILIATSTFWWLIV. At 104 to 105 the chain is on the extracellular side; that stretch reads GR. The chain crosses the membrane as a helical span at residues 106–126; sequence VTIGFAISISSMACCIYVSEI. Residues 127–132 lie on the Cytoplasmic side of the membrane; the sequence is VRPHQR. A helical membrane pass occupies residues 133–153; that stretch reads GMLVSLYETGITVGILISYAM. Topologically, residues 154–165 are extracellular; it reads NYFLSGVNESWK. A glycan (N-linked (GlcNAc...) asparagine) is linked at asparagine 161. The chain crosses the membrane as a helical span at residues 166–186; sequence YMFGLAIVPAAFQFISILFLP. Residues 187–240 are Cytoplasmic-facing; that stretch reads SKPHKLNFWEQDTDDGFIELEETGEAGEFKPDTYDRQYTFLDLFRSKDNMRTRT. Residues 241–261 traverse the membrane as a helical segment; sequence LLGLGLVLFQQFTGQPNVLYY. A D-glucose-binding site is contributed by 250–251; that stretch reads QQ. Residues 262 to 277 are Extracellular-facing; sequence ASTIFQSVGFQSNSSA. Asparagine 274 is a glycosylation site (N-linked (GlcNAc...) asparagine). Residues 278–298 traverse the membrane as a helical segment; that stretch reads VLASVGLGVVKVASTLIAICF. Over 299–305 the chain is Cytoplasmic; the sequence is ADKAGRR. Residues 306-326 form a helical membrane-spanning segment; sequence ILLLAGCIVMTIAITGIGIVS. Topologically, residues 327–415 are extracellular; that stretch reads FTVKMDSHRD…ASPELPSNYT (89 aa). 4 N-linked (GlcNAc...) asparagine glycosylation sites follow: asparagine 344, asparagine 351, asparagine 400, and asparagine 413. The chain crosses the membrane as a helical span at residues 416–436; the sequence is ILNWITLLSMMAFVSAFSIGF. Topologically, residues 437–464 are cytoplasmic; that stretch reads GPMTWIVLSEIYPADIRGRAFAFCNSFN. Tryptophan 441 is a D-glucose binding site. Residues 465-483 traverse the membrane as a helical segment; that stretch reads WAANLLITLTFLDVIASIG. Residues 484 to 485 lie on the Extracellular side of the membrane; sequence LS. A helical membrane pass occupies residues 486-506; it reads WTFLLYGVVGLLAIAFIYFFI. The Cytoplasmic portion of the chain corresponds to 507–555; that stretch reads PETKGQSLEEIDKQFSTKRILQKRETSKGVGKRPSSGPPYQRIGKASPS. The interval 528-555 is disordered; the sequence is QKRETSKGVGKRPSSGPPYQRIGKASPS.

The protein belongs to the major facilitator superfamily. Sugar transporter (TC 2.A.1.1) family. Glucose transporter subfamily.

It localises to the endomembrane system. Its subcellular location is the cytoplasm. The protein localises to the perinuclear region. The catalysed reaction is D-glucose(out) = D-glucose(in). Its function is as follows. Facilitative glucose transporter required for the development of the cardiovascular system. This Xenopus tropicalis (Western clawed frog) protein is Solute carrier family 2, facilitated glucose transporter member 10.